The primary structure comprises 253 residues: Salivary gland SP38-40.B protein (253 aa).

The signal sequence occupies residues 1-21; the sequence is MRIKFLVVLAVICLLAHYASA. Disordered stretches follow at residues 23–51, 140–168, and 203–253; these read GMGGDKKPKDAPKPKDAPKPKEVKPVKAD, KDEKKEKKVVKVIKPPKEKPPKKPRKECS, and VQGK…DAKK. Basic and acidic residues-rich tracts occupy residues 26–51 and 154–168; these read GDKKPKDAPKPKDAPKPKEVKPVKAD and PPKEKPPKKPRKECS. Repeat copies occupy residues 29–34 and 35–40. A 3 X 6 AA approximate tandem repeats of K-P-K-D-A-P region spans residues 29–47; the sequence is KPKDAPKPKDAPKPKEVKP. One copy of the 1-3; approximate repeat lies at 41-47; it reads KPKEVKP. 2 tandem repeats follow at residues 153–156 and 158–161. The interval 153–166 is 3 X 4 AA approximate tandem repeats of K-P-P-K; the sequence is KPPKEKPPKKPRKE. Residues 162–166 form a 2-3; approximate repeat; that stretch reads KPRKE. Positions 206–217 are enriched in basic residues; the sequence is KQKKGAKKAKGG. Repeat copies occupy residues 222 to 225, 226 to 229, 230 to 233, 234 to 237, 238 to 241, and 242 to 245. Residues 222–249 form a 7 X 4 AA approximate tandem repeats of P-K-P-[GAV] region; that stretch reads PKPGPKPAPKPGPKPAPKPVPKPADKPK. Over residues 225–243 the composition is skewed to pro residues; it reads GPKPAPKPGPKPAPKPVPK. The segment covering 244-253 has biased composition (basic and acidic residues); it reads PADKPKDAKK. Residues 246–249 form a 3-7; approximate repeat; the sequence is DKPK.

As to expression, salivary gland.

It localises to the secreted. Functionally, used by the larvae to construct a supramolecular structure, the larval tube. The chain is Salivary gland SP38-40.B protein (SP38-40.B) from Chironomus tentans (Midge).